We begin with the raw amino-acid sequence, 118 residues long: Cysteine--tRNA ligase (118 aa).

Residue Cys-28 coordinates Zn(2+). Positions 30 to 40 match the 'HIGH' region motif; that stretch reads PTVYNYIHIGN.

Belongs to the class-I aminoacyl-tRNA synthetase family. Monomer. Requires Zn(2+) as cofactor.

Its subcellular location is the cytoplasm. It catalyses the reaction tRNA(Cys) + L-cysteine + ATP = L-cysteinyl-tRNA(Cys) + AMP + diphosphate. In Staphylococcus xylosus, this protein is Cysteine--tRNA ligase (cysS).